A 470-amino-acid polypeptide reads, in one-letter code: Uronate isomerase (470 aa).

The protein belongs to the metallo-dependent hydrolases superfamily. Uronate isomerase family.

The catalysed reaction is D-glucuronate = D-fructuronate. It catalyses the reaction aldehydo-D-galacturonate = keto-D-tagaturonate. Its pathway is carbohydrate metabolism; pentose and glucuronate interconversion. The protein is Uronate isomerase of Shigella boydii serotype 18 (strain CDC 3083-94 / BS512).